The sequence spans 1475 residues: Protein STU1 (1475 aa).

Disordered stretches follow at residues arginine 870–leucine 913 and aspartate 1113–alanine 1134. Basic and acidic residues predominate over residues aspartate 887 to aspartate 896.

Belongs to the CLASP family. In terms of assembly, interacts with microtubules.

The protein localises to the cytoplasm. The protein resides in the cytoskeleton. It is found in the nucleus. It localises to the spindle. Its function is as follows. Microtubule binding protein that promotes the stabilization of dynamic microtubules. Required for mitotic spindle formation. The polypeptide is Protein STU1 (STU1) (Eremothecium gossypii (strain ATCC 10895 / CBS 109.51 / FGSC 9923 / NRRL Y-1056) (Yeast)).